The sequence spans 216 residues: MHAPHTATALRRTKKLPPLRVGIGGPVGSGKTTLLEMLCKGMRERYDLVAITNDIYTKEDQRLLTIAGALPEERIMGVETGGCPHTAIREDASINLEAVERMLARFPDADIVFIESGGDNLAATFSPELSDLTIYVIDVAGGEKIPRKGGPGITKSDLLVINKTDLAPLVGANLDVMASDTKKMRGERPYVMCNLKALDGVADVIAFIEKKGLLTV.

25 to 32 lines the GTP pocket; the sequence is GPVGSGKT.

It belongs to the SIMIBI class G3E GTPase family. UreG subfamily. As to quaternary structure, homodimer. UreD, UreF and UreG form a complex that acts as a GTP-hydrolysis-dependent molecular chaperone, activating the urease apoprotein by helping to assemble the nickel containing metallocenter of UreC. The UreE protein probably delivers the nickel.

It localises to the cytoplasm. Facilitates the functional incorporation of the urease nickel metallocenter. This process requires GTP hydrolysis, probably effectuated by UreG. The chain is Urease accessory protein UreG from Burkholderia thailandensis (strain ATCC 700388 / DSM 13276 / CCUG 48851 / CIP 106301 / E264).